Here is a 524-residue protein sequence, read N- to C-terminus: Solute carrier family 35 member F5 (524 aa).

The tract at residues 1–22 is disordered; sequence MVPPRHHPGAGRPGALSSSPPF. Over residues 13 to 22 the composition is skewed to low complexity; sequence PGALSSSPPF. 2 helical membrane-spanning segments follow: residues 69 to 89 and 101 to 121; these read MALGIVILLLVDVIWVASSEL and FFSTFAKTSMFVLYLLGFIVW. Position 207 is a phosphoserine (Ser207). The next 8 helical transmembrane spans lie at 244-264, 269-289, 297-317, 328-348, 362-382, 396-416, 421-441, and 453-473; these read ISFFFCFVWFLANFSYQEALS, AIVNILSSTSGLFTLILAAMF, FTLSKLLAVILSIGGVVLVNL, TIGSIWSLVGAMLYAVYIVMI, MFFGFVGLFNLLLLWPGFFLL, VVLMCIVINGLIGTVLSEFLW, FLTSSLIGTLALSLTIPLSII, and WLFFAGAIPVFFSFFIATLLC. Residues 253–317 form the EamA domain; the sequence is FLANFSYQEA…SIGGVVLVNL (65 aa).

Belongs to the SLC35F solute transporter family.

The protein resides in the membrane. Putative solute transporter. The sequence is that of Solute carrier family 35 member F5 (SLC35F5) from Bos taurus (Bovine).